We begin with the raw amino-acid sequence, 386 residues long: Methylthioribose-1-phosphate isomerase (386 aa).

The Proton donor role is filled by Asp261.

This sequence belongs to the eIF-2B alpha/beta/delta subunits family. MtnA subfamily.

It localises to the cytoplasm. The protein localises to the nucleus. It catalyses the reaction 5-(methylsulfanyl)-alpha-D-ribose 1-phosphate = 5-(methylsulfanyl)-D-ribulose 1-phosphate. It functions in the pathway amino-acid biosynthesis; L-methionine biosynthesis via salvage pathway; L-methionine from S-methyl-5-thio-alpha-D-ribose 1-phosphate: step 1/6. In terms of biological role, catalyzes the interconversion of methylthioribose-1-phosphate (MTR-1-P) into methylthioribulose-1-phosphate (MTRu-1-P). The polypeptide is Methylthioribose-1-phosphate isomerase (Paracoccidioides brasiliensis (strain Pb03)).